A 509-amino-acid chain; its full sequence is Coiled-coil domain-containing protein 181 (509 aa).

Basic and acidic residues predominate over residues 58 to 82 (VIEHTKQHSDPDKSLQDEVSPRKND). 3 disordered regions span residues 58–120 (VIEH…EEED), 241–332 (PINN…VTST), and 345–367 (QLEQ…EEKE). 2 stretches are compositionally biased toward polar residues: residues 243 to 266 (NNAN…SVSG) and 300 to 332 (TCPS…VTST). A coiled-coil region spans residues 335-375 (LSPRQKELQKQLEQKREKLKREEERRKIEEEKEKKRENDIV).

This sequence belongs to the CCDC181 family. As to quaternary structure, homodimer. Interacts with HOOK1. Interacts with HOOK2. Interacts with HOOK3.

It localises to the cytoplasm. Its subcellular location is the cytoskeleton. The protein localises to the cell projection. It is found in the cilium. The protein resides in the flagellum. Its function is as follows. Microtubule-binding protein that localizes to the microtubular manchette of elongating spermatids. The protein is Coiled-coil domain-containing protein 181 of Pongo abelii (Sumatran orangutan).